A 424-amino-acid polypeptide reads, in one-letter code: 26S proteasome regulatory subunit 6A homolog A (424 aa).

Positions 1–21 (MATPMVEDTSSFEEDQLASMS) are disordered. At Ala2 the chain carries N-acetylalanine. Ser19 bears the Phosphoserine mark. Residue 212-219 (GPPGTGKT) coordinates ATP. Lys235 is covalently cross-linked (Glycyl lysine isopeptide (Lys-Gly) (interchain with G-Cter in ubiquitin)). Thr278 carries the post-translational modification O-acetylthreonine. Glycyl lysine isopeptide (Lys-Gly) (interchain with G-Cter in ubiquitin) cross-links involve residues Lys279 and Lys416.

This sequence belongs to the AAA ATPase family. Component of the 19S regulatory particle (RP/PA700) base subcomplex of the 26S proteasome. The 26S proteasome is composed of a core protease (CP), known as the 20S proteasome, capped at one or both ends by the 19S regulatory particle (RP/PA700). The RP/PA700 complex is composed of at least 17 different subunits in two subcomplexes, the base and the lid, which form the portions proximal and distal to the 20S proteolytic core, respectively. Ubiquitous.

The protein resides in the cytoplasm. Its subcellular location is the nucleus. Functionally, the 26S proteasome is involved in the ATP-dependent degradation of ubiquitinated proteins. The regulatory (or ATPase) complex confers ATP dependency and substrate specificity to the 26S complex. Interacts with transit peptides of proteins targeted to the chloroplast, and may be involved in the degradation of unimported plastid protein precursors. Plays a essential role in the gametophyte development. Involved in tolerance to zinc deficiency, possibly through alleviation of oxidative stresses or processing of poly-ubiquitinated proteins. The chain is 26S proteasome regulatory subunit 6A homolog A from Arabidopsis thaliana (Mouse-ear cress).